A 50-amino-acid polypeptide reads, in one-letter code: Photosystem II reaction center protein M (50 aa).

Residues 7 to 27 traverse the membrane as a helical segment; it reads GFVASLLFVGVPTIFLIGLFI.

Belongs to the PsbM family. As to quaternary structure, PSII is composed of 1 copy each of membrane proteins PsbA, PsbB, PsbC, PsbD, PsbE, PsbF, PsbH, PsbI, PsbJ, PsbK, PsbL, PsbM, PsbT, PsbX, PsbY, Psb30/Ycf12, peripheral proteins PsbO, CyanoQ (PsbQ), PsbU, PsbV and a large number of cofactors. It forms dimeric complexes.

It localises to the cellular thylakoid membrane. One of the components of the core complex of photosystem II (PSII). PSII is a light-driven water:plastoquinone oxidoreductase that uses light energy to abstract electrons from H(2)O, generating O(2) and a proton gradient subsequently used for ATP formation. It consists of a core antenna complex that captures photons, and an electron transfer chain that converts photonic excitation into a charge separation. This subunit is found at the monomer-monomer interface. This chain is Photosystem II reaction center protein M, found in Prochlorococcus marinus (strain MIT 9515).